A 193-amino-acid chain; its full sequence is Acyl carrier protein phosphodiesterase (193 aa).

Belongs to the AcpH family.

It catalyses the reaction holo-[ACP] + H2O = apo-[ACP] + (R)-4'-phosphopantetheine + H(+). Functionally, converts holo-ACP to apo-ACP by hydrolytic cleavage of the phosphopantetheine prosthetic group from ACP. This Escherichia coli O139:H28 (strain E24377A / ETEC) protein is Acyl carrier protein phosphodiesterase.